A 322-amino-acid chain; its full sequence is Malate dehydrogenase (322 aa).

Residues 10-15 (GSGQIG) and Asp-34 contribute to the NAD(+) site. Substrate contacts are provided by Arg-83 and Arg-89. Residues Asn-96 and 119-121 (ITN) each bind NAD(+). Asn-121 and Arg-152 together coordinate substrate. The active-site Proton acceptor is His-176.

Belongs to the LDH/MDH superfamily. MDH type 3 family.

The catalysed reaction is (S)-malate + NAD(+) = oxaloacetate + NADH + H(+). Functionally, catalyzes the reversible oxidation of malate to oxaloacetate. The sequence is that of Malate dehydrogenase from Bradyrhizobium diazoefficiens (strain JCM 10833 / BCRC 13528 / IAM 13628 / NBRC 14792 / USDA 110).